A 311-amino-acid chain; its full sequence is MTLPELPKDLVEEILCFVPATSLKRLRSTCKGWNRLFKDDKRFARKHIEKAAKQFQPLTLTKNYRICPINVNLHGTTPSLEVKNEWIELGDRYNEDKDSEIYEFSSDSWRVIDDIIKPPHYMEYFRKCLSLKGNTYWLGIDRRRRPPDLRITLIKFDFGTEKFGYVPLPPPCQVHGFEASRLSAVGDEKLSLLLVGDSTSNTELWVTSKIGEANVVSWSKVLSLYPKPNVGFWHGLSFLLDEEKKVLLCCKSKGWMKEEDEDNVYIVGEDTKFILLNFGVQTIGGYSPIIVNYVPSLGQIELAGSKRKRDY.

One can recognise an F-box domain in the interval 1–46 (MTLPELPKDLVEEILCFVPATSLKRLRSTCKGWNRLFKDDKRFARK).

The chain is F-box protein At3g18320 from Arabidopsis thaliana (Mouse-ear cress).